The chain runs to 896 residues: Myelin regulatory factor-like protein (896 aa).

Residues 111 to 403 constitute a DNA-binding region (NDT80); that stretch reads GLPHRTFHNC…SNPGQFENDI (293 aa). Residues 449-557 enclose the Peptidase S74 domain; sequence SDSRAKQNVQ…KLTNNLEERI (109 aa). Residues 541–573 adopt a coiled-coil conformation; sequence GAVKQLCKLTNNLEERIEELEIWNRKLARLKRL. The chain crosses the membrane as a helical span at residues 622–638; that stretch reads VFQSLVITLIAVMAFCL. Residues 648–658 show a composition bias toward polar residues; the sequence is APSSNLTSSQE. The tract at residues 648–672 is disordered; that stretch reads APSSNLTSSQEPALPSTASPSAPNT. Low complexity predominate over residues 659 to 672; that stretch reads PALPSTASPSAPNT.

The protein belongs to the MRF family.

The protein resides in the membrane. The sequence is that of Myelin regulatory factor-like protein (MYRFL) from Bos taurus (Bovine).